Reading from the N-terminus, the 165-residue chain is Thiol peroxidase (165 aa).

The Thioredoxin domain maps to 18–165 (PQVGDNLAEF…DYDAALAALN (148 aa)). Catalysis depends on C60, which acts as the Cysteine sulfenic acid (-SOH) intermediate. C60 and C94 are oxidised to a cystine.

Belongs to the peroxiredoxin family. Tpx subfamily. Homodimer.

The enzyme catalyses a hydroperoxide + [thioredoxin]-dithiol = an alcohol + [thioredoxin]-disulfide + H2O. Its function is as follows. Thiol-specific peroxidase that catalyzes the reduction of hydrogen peroxide and organic hydroperoxides to water and alcohols, respectively. Plays a role in cell protection against oxidative stress by detoxifying peroxides. The protein is Thiol peroxidase of Corynebacterium glutamicum (strain ATCC 13032 / DSM 20300 / JCM 1318 / BCRC 11384 / CCUG 27702 / LMG 3730 / NBRC 12168 / NCIMB 10025 / NRRL B-2784 / 534).